We begin with the raw amino-acid sequence, 77 residues long: Metallocarboxypeptidase inhibitor (77 aa).

A signal peptide spans 1–32 (MAQKFTILFTILLVVIAAQDVMAQDATLTKLF). Q33 carries the pyrrolidone carboxylic acid modification. Disulfide bonds link C39/C55, C43/C58, and C49/C65. Residues 70–77 (GRAMAIGV) constitute a propeptide, hydrophobic peptide.

This sequence to potato MCPI. Ovaries.

Functionally, may play a defensive role against insect attacks. This is Metallocarboxypeptidase inhibitor from Solanum lycopersicum (Tomato).